Here is a 162-residue protein sequence, read N- to C-terminus: Caveolin-2 (162 aa).

Residues 1–86 lie on the Cytoplasmic side of the membrane; sequence MGLETEKADV…FEISKYVMYK (86 aa). Tyr-19 carries the post-translational modification Phosphotyrosine. A phosphoserine mark is found at Ser-20 and Ser-36. Positions 87-107 form an intramembrane region, helical; it reads FLTVFLAIPLAFVAGILFATL. The Cytoplasmic portion of the chain corresponds to 108-162; sequence SCLHIWIIMPFVKTCLMVLPSVQTIWKSVTDVIIAPLCTSVGRSFSSISLQLSHD.

The protein belongs to the caveolin family. In terms of assembly, homodimer. Caveolin-1 and -2 colocalize and form a stable hetero-oligomeric complex.

Its subcellular location is the golgi apparatus membrane. It localises to the cell membrane. The protein resides in the membrane. The protein localises to the caveola. Its function is as follows. May act as a scaffolding protein within caveolar membranes. Interacts directly with G-protein alpha subunits and can functionally regulate their activity. Caveolin-2 may function as an accessory protein in conjunction with caveolin-1. This chain is Caveolin-2 (CAV2), found in Microcebus murinus (Gray mouse lemur).